The sequence spans 1077 residues: MPLGLFSSGKAQVLCDEKIPGGKKKEPKQLSENKCKGVTLKLDHTRVTIEKQIAEGGFAIVYVASDRKNNKFALKRQFTKDNEKQLEACCREHSFLKQCIGHKNIVEFVDSYTNCLGNGIWECMLLTEYHQKNVLQLMNERISQNQYLTNDEILSIFTDLCEAVSFIHNRPQPIIHRDLKVENVLISSHKPPHYVLCDFGSATTQILSVEKYGVEYVKSEVERNTTMCYRSPEMIDFYSGLEIGLKSDIWALGVLLYRLCFFCVPFEESPLAIQSVNYQFPSVPNIPDEIKVLIYMLLDIDVNRRPSIYQTSVLAFEANHRKPLSEEIQNKKCTDAVPSLKSCIQLMRDGSNPRNKRDSSPRNPEAPPIQSSSKMASLSQQVPSISNISMPSGSGTVETSVAPRLRPKATTVVPNVPSISPVPPVGLPHLRLPSKGSTDETDGSQVRKVPIDFHHRQSFSGEEQLKPAAEADSAGPLSCPLIKPTDLGFTDLDKPALPRDRAQTDGKRRLPHESDIIFQQQHRRNVSDTSQISRSAFKPYSSQQTTSKTSSQVVRSVEDMSQRQNGGSGEWNPFLVAPFSNNSISRKDGQESAFMMDDSHFGMVFDEIRRKEIPAELDSETSSIDSRDPFGAAPFDQLTVSTSSSAQPVSLPPATDEDDERQLLSETDEEEKYEIDEKEEIQTKKDETINEEDSEIDEQRMNDRRRYSYENIDGVGDDASSDSRGKTDRDDSEEEEDDDSRRGGDTSHDEDSQNTVGSEDGEGGSRPLLEDDGLEDDDDHELISSFSSSSTNYPPLFIGTSTPHTQNPITNPFLRDELTPKMIITAPLPTAKNNLDDDWDLGDRWTDRRDTVFERPASEHQNVFAPATLPRQATPLVCRFKPDLPTAAPVSIIPSMSNTSFPEAVRDSDTVPCEPIIGTLISVGAPTDPPPPPLPKKPTEASPTQETTATIPVALGKKEKLLKKEKKKEKKDGKKDKLKLEEYREKGSSEPETDGSEAEIWTNDGATTFSNKKKKKSTFGLRSSHPSIVANDLQFSSPMPPVVKKSSKDKKSSLTGKNASFVNTSFQPEDHDDPTDL.

One can recognise a Protein kinase domain in the interval 47–317; that stretch reads VTIEKQIAEG…IYQTSVLAFE (271 aa). ATP contacts are provided by residues 53 to 61 and lysine 75; that span reads IAEGGFAIV. Aspartate 178 acts as the Proton acceptor in catalysis. Disordered stretches follow at residues 347 to 444, 488 to 554, 616 to 813, and 920 to 1077; these read MRDG…TDGS, GFTD…SQVV, ELDS…TNPF, and LISV…PTDL. The segment covering 369 to 399 has biased composition (polar residues); it reads IQSSSKMASLSQQVPSISNISMPSGSGTVET. A compositionally biased stretch (basic and acidic residues) spans 491–515; sequence DLDKPALPRDRAQTDGKRRLPHESD. Low complexity predominate over residues 541 to 554; that stretch reads SSQQTTSKTSSQVV. Residues 638 to 648 are compositionally biased toward polar residues; the sequence is LTVSTSSSAQP. Positions 655–679 are enriched in acidic residues; it reads TDEDDERQLLSETDEEEKYEIDEKE. 2 stretches are compositionally biased toward basic and acidic residues: residues 697-708 and 739-751; these read DEQRMNDRRRYS and DSRR…HDED. A compositionally biased stretch (acidic residues) spans 770–780; sequence EDDGLEDDDDH. A compositionally biased stretch (polar residues) spans 799–810; the sequence is GTSTPHTQNPIT. The span at 927–936 shows a compositional bias: pro residues; that stretch reads TDPPPPPLPK. The segment covering 941-950 has biased composition (polar residues); sequence ASPTQETTAT. Positions 960–969 are enriched in basic residues; it reads KLLKKEKKKE. The span at 970 to 989 shows a compositional bias: basic and acidic residues; sequence KKDGKKDKLKLEEYREKGSS. Residues 1054–1067 show a composition bias toward polar residues; that stretch reads LTGKNASFVNTSFQ.

This sequence belongs to the protein kinase superfamily. Ser/Thr protein kinase family. Mg(2+) serves as cofactor.

The protein resides in the cytoplasm. The catalysed reaction is L-seryl-[protein] + ATP = O-phospho-L-seryl-[protein] + ADP + H(+). It carries out the reaction L-threonyl-[protein] + ATP = O-phospho-L-threonyl-[protein] + ADP + H(+). In terms of biological role, serine/threonine-protein kinase which may play a role in lin-12-mediated cell-fate decisions. The sequence is that of Serine/threonine-protein kinase sel-5 from Caenorhabditis elegans.